The primary structure comprises 212 residues: Stromal cell-derived factor 2-like protein (212 aa).

Positions 1 to 19 (MKSLFLILILCITIPLIFA) are cleaved as a signal peptide. Asparagine 20 carries N-linked (GlcNAc...) asparagine glycosylation. 3 MIR domains span residues 29–86 (ITKV…IKGP), 94–149 (GTVV…VETE), and 151–206 (GKEW…TEEG).

It is found in the secreted. The polypeptide is Stromal cell-derived factor 2-like protein (Dictyostelium discoideum (Social amoeba)).